The chain runs to 312 residues: Putative ring-cleaving dioxygenase MhqO (312 aa).

VOC domains are found at residues 7 to 131 (GIHH…IVER) and 152 to 269 (GFGG…IATD). The Fe cation site is built by histidine 10, histidine 217, and glutamate 265.

The protein belongs to the extradiol ring-cleavage dioxygenase family. Fe(2+) serves as cofactor.

It localises to the cytoplasm. Putative ring-cleavage dioxygenase that may contribute to the degradation of aromatic compounds. The protein is Putative ring-cleaving dioxygenase MhqO (mhqO) of Bacillus subtilis (strain 168).